The following is a 444-amino-acid chain: Protein phosphatase 2C homolog C10F6.17c (444 aa).

The region spanning 85 to 439 is the PPM-type phosphatase domain; it reads RYDFNQVASN…DDITVTVIFF (355 aa). Asp-121, Gly-122, and Asp-344 together coordinate Mn(2+).

This sequence belongs to the PP2C family. Requires Mg(2+) as cofactor. Mn(2+) is required as a cofactor.

Its subcellular location is the mitochondrion. It carries out the reaction O-phospho-L-seryl-[protein] + H2O = L-seryl-[protein] + phosphate. The enzyme catalyses O-phospho-L-threonyl-[protein] + H2O = L-threonyl-[protein] + phosphate. Involved in regulation of pyruvate dehydrogenase activity. This is Protein phosphatase 2C homolog C10F6.17c from Schizosaccharomyces pombe (strain 972 / ATCC 24843) (Fission yeast).